Consider the following 79-residue polypeptide: Acyl carrier protein (79 aa).

In terms of domain architecture, Carrier spans 2 to 77 (SDVAERVKKI…DAIDFIKANA (76 aa)). Serine 37 carries the post-translational modification O-(pantetheine 4'-phosphoryl)serine.

Belongs to the acyl carrier protein (ACP) family. 4'-phosphopantetheine is transferred from CoA to a specific serine of apo-ACP by AcpS. This modification is essential for activity because fatty acids are bound in thioester linkage to the sulfhydryl of the prosthetic group.

It is found in the cytoplasm. It functions in the pathway lipid metabolism; fatty acid biosynthesis. In terms of biological role, carrier of the growing fatty acid chain in fatty acid biosynthesis. In Azospirillum brasilense, this protein is Acyl carrier protein.